The following is a 351-amino-acid chain: Meiotically up-regulated gene 1 protein (351 aa).

It is found in the cytoplasm. Its function is as follows. Required for correct meiotic chromosome segregation. The polypeptide is Meiotically up-regulated gene 1 protein (mug1) (Schizosaccharomyces pombe (strain 972 / ATCC 24843) (Fission yeast)).